A 151-amino-acid polypeptide reads, in one-letter code: UPF0208 membrane protein PC1_2779 (151 aa).

A run of 2 helical transmembrane segments spans residues 46–66 (FGIR…IALG) and 69–89 (LGPA…GLWW).

This sequence belongs to the UPF0208 family.

Its subcellular location is the cell inner membrane. The chain is UPF0208 membrane protein PC1_2779 from Pectobacterium carotovorum subsp. carotovorum (strain PC1).